The primary structure comprises 452 residues: Probable cytosolic iron-sulfur protein assembly protein 1 (452 aa).

The segment covering 1-12 (MPPPTTPTPNPS) has biased composition (pro residues). The interval 1–24 (MPPPTTPTPNPSIPQKATLTPLPP) is disordered. 6 WD repeats span residues 70–121 (GHAR…DAAA), 161–200 (GHEN…QGGD), 213–267 (EHDG…EWVC), 273–319 (GHGG…FGGV), 340–379 (VHTR…EDVA), and 411–452 (YEVN…VRIS).

It belongs to the WD repeat CIA1 family.

Its function is as follows. Essential component of the cytosolic iron-sulfur (Fe/S) protein assembly machinery. Required for the maturation of extramitochondrial Fe/S proteins. The polypeptide is Probable cytosolic iron-sulfur protein assembly protein 1 (Chaetomium globosum (strain ATCC 6205 / CBS 148.51 / DSM 1962 / NBRC 6347 / NRRL 1970) (Soil fungus)).